The chain runs to 312 residues: 3-methyl-2-oxobutanoate hydroxymethyltransferase (312 aa).

It belongs to the PanB family.

The enzyme catalyses 3-methyl-2-oxobutanoate + (6R)-5,10-methylene-5,6,7,8-tetrahydrofolate + H2O = 2-dehydropantoate + (6S)-5,6,7,8-tetrahydrofolate. The protein operates within cofactor biosynthesis; (R)-pantothenate biosynthesis; (R)-pantoate from 3-methyl-2-oxobutanoate: step 1/2. Functionally, probable 3-methyl-2-oxobutanoate hydroxymethyltransferase required for pantothenic acid biosynthesis. Acts downstream in the pantothenic acid pathway. This Saccharomyces cerevisiae (strain ATCC 204508 / S288c) (Baker's yeast) protein is 3-methyl-2-oxobutanoate hydroxymethyltransferase.